A 159-amino-acid polypeptide reads, in one-letter code: Transcription elongation factor GreA (159 aa).

A coiled-coil region spans residues 14-76 (IKKLENELEY…QLENMLKNAS (63 aa)).

Belongs to the GreA/GreB family.

In terms of biological role, necessary for efficient RNA polymerase transcription elongation past template-encoded arresting sites. The arresting sites in DNA have the property of trapping a certain fraction of elongating RNA polymerases that pass through, resulting in locked ternary complexes. Cleavage of the nascent transcript by cleavage factors such as GreA or GreB allows the resumption of elongation from the new 3'terminus. GreA releases sequences of 2 to 3 nucleotides. The chain is Transcription elongation factor GreA from Clostridium kluyveri (strain NBRC 12016).